The chain runs to 172 residues: C-phycocyanin beta subunit (172 aa).

N4-methylasparagine is present on asparagine 72. (2R,3E)-phycocyanobilin-binding residues include cysteine 82 and cysteine 153.

Belongs to the phycobiliprotein family. In terms of assembly, heterodimer of an alpha and a beta subunit, which further assembles into trimers and the trimers into hexamers. In terms of processing, contains two covalently linked bilin chromophores.

Its subcellular location is the cellular thylakoid membrane. Its function is as follows. Light-harvesting photosynthetic bile pigment-protein from the phycobiliprotein complex (phycobilisome, PBS). Phycocyanin is the major phycobiliprotein in the PBS rod. The polypeptide is C-phycocyanin beta subunit (cpcB) (Synechocystis sp. (strain PCC 6701)).